A 148-amino-acid chain; its full sequence is Deoxyuridine 5'-triphosphate nucleotidohydrolase (148 aa).

Substrate-binding positions include 67–69 (RSG), asparagine 80, 84–86 (LID), and methionine 94.

The protein belongs to the dUTPase family. The cofactor is Mg(2+).

It carries out the reaction dUTP + H2O = dUMP + diphosphate + H(+). The protein operates within pyrimidine metabolism; dUMP biosynthesis; dUMP from dCTP (dUTP route): step 2/2. In terms of biological role, this enzyme is involved in nucleotide metabolism: it produces dUMP, the immediate precursor of thymidine nucleotides and it decreases the intracellular concentration of dUTP so that uracil cannot be incorporated into DNA. The sequence is that of Deoxyuridine 5'-triphosphate nucleotidohydrolase from Burkholderia ambifaria (strain MC40-6).